The chain runs to 90 residues: Small ribosomal subunit protein bS16 (90 aa).

It belongs to the bacterial ribosomal protein bS16 family.

The protein is Small ribosomal subunit protein bS16 of Heliobacterium modesticaldum (strain ATCC 51547 / Ice1).